Here is a 497-residue protein sequence, read N- to C-terminus: Cytochrome P450 2D6 (497 aa).

Aspartate 301 lines the substrate pocket. Cysteine 443 lines the heme pocket.

The protein belongs to the cytochrome P450 family. The cofactor is heme.

It is found in the endoplasmic reticulum membrane. Its subcellular location is the microsome membrane. It catalyses the reaction (5Z,8Z,11Z,14Z)-eicosatetraenoate + reduced [NADPH--hemoprotein reductase] + O2 = (8R,9S)-epoxy-(5Z,11Z,14Z)-eicosatrienoate + oxidized [NADPH--hemoprotein reductase] + H2O + H(+). The enzyme catalyses (5Z,8Z,11Z,14Z)-eicosatetraenoate + reduced [NADPH--hemoprotein reductase] + O2 = (11R,12S)-epoxy-(5Z,8Z,14Z)-eicosatrienoate + oxidized [NADPH--hemoprotein reductase] + H2O + H(+). It carries out the reaction (5Z,8Z,11Z,14Z)-eicosatetraenoate + reduced [NADPH--hemoprotein reductase] + O2 = (14S,15R)-epoxy-(5Z,8Z,11Z)-eicosatrienoate + oxidized [NADPH--hemoprotein reductase] + H2O + H(+). The catalysed reaction is N-(5Z,8Z,11Z,14Z-eicosatetraenoyl)-ethanolamine + reduced [NADPH--hemoprotein reductase] + O2 = N-(8,9-epoxy-5Z,11Z,14Z-eicosatrienoyl)-ethanolamine + oxidized [NADPH--hemoprotein reductase] + H2O + H(+). It catalyses the reaction N-(5Z,8Z,11Z,14Z-eicosatetraenoyl)-ethanolamine + reduced [NADPH--hemoprotein reductase] + O2 = N-(11,12-epoxy-5Z,8Z,14Z-eicosatrienoyl)-ethanolamine + oxidized [NADPH--hemoprotein reductase] + H2O + H(+). The enzyme catalyses N-(5Z,8Z,11Z,14Z-eicosatetraenoyl)-ethanolamine + reduced [NADPH--hemoprotein reductase] + O2 = N-(14,15-epoxy-5Z,8Z,11Z-eicosatrienoyl)-ethanolamine + oxidized [NADPH--hemoprotein reductase] + H2O + H(+). It carries out the reaction N-(5Z,8Z,11Z,14Z-eicosatetraenoyl)-ethanolamine + reduced [NADPH--hemoprotein reductase] + O2 = N-(20-hydroxy-5Z,8Z,11Z,14Z-eicosatetraenoyl)-ethanolamine + oxidized [NADPH--hemoprotein reductase] + H2O + H(+). The catalysed reaction is (5Z,8Z,11Z,14Z,17Z)-eicosapentaenoate + reduced [NADPH--hemoprotein reductase] + O2 = (17S,18R)-epoxy-(5Z,8Z,11Z,14Z)-eicosatetraenoate + oxidized [NADPH--hemoprotein reductase] + H2O + H(+). It catalyses the reaction (4Z,7Z,10Z,13Z,16Z,19Z)-docosahexaenoate + reduced [NADPH--hemoprotein reductase] + O2 = (19R,20S)-epoxy-(4Z,7Z,10Z,13Z,16Z)-docosapentaenoate + oxidized [NADPH--hemoprotein reductase] + H2O + H(+). The enzyme catalyses (4Z,7Z,10Z,13Z,16Z,19Z)-docosahexaenoate + reduced [NADPH--hemoprotein reductase] + O2 = (19S,20R)-epoxy-(4Z,7Z,10Z,13Z,16Z)-docosapentaenoate + oxidized [NADPH--hemoprotein reductase] + H2O + H(+). It carries out the reaction cholesterol + reduced [NADPH--hemoprotein reductase] + O2 = 25-hydroxycholesterol + oxidized [NADPH--hemoprotein reductase] + H2O + H(+). The catalysed reaction is all-trans-retinol + reduced [NADPH--hemoprotein reductase] + O2 = all-trans-retinal + oxidized [NADPH--hemoprotein reductase] + 2 H2O + H(+). It participates in cofactor metabolism; retinol metabolism. It functions in the pathway lipid metabolism; fatty acid metabolism. Its pathway is steroid metabolism; cholesterol metabolism. In terms of biological role, a cytochrome P450 monooxygenase involved in the metabolism of fatty acids, steroids and retinoids. Mechanistically, uses molecular oxygen inserting one oxygen atom into a substrate, and reducing the second into a water molecule, with two electrons provided by NADPH via cytochrome P450 reductase (NADPH--hemoprotein reductase). Catalyzes the epoxidation of double bonds of polyunsaturated fatty acids (PUFA). Metabolizes endocannabinoid arachidonoylethanolamide (anandamide) to 20-hydroxyeicosatetraenoic acid ethanolamide (20-HETE-EA) and 8,9-, 11,12-, and 14,15-epoxyeicosatrienoic acid ethanolamides (EpETrE-EAs), potentially modulating endocannabinoid system signaling. Catalyzes the hydroxylation of carbon-hydrogen bonds. Metabolizes cholesterol toward 25-hydroxycholesterol, a physiological regulator of cellular cholesterol homeostasis. Catalyzes the oxidative transformations of all-trans retinol to all-trans retinal, a precursor for the active form all-trans-retinoic acid. Also involved in the oxidative metabolism of drugs such as antiarrhythmics, adrenoceptor antagonists, and tricyclic antidepressants. The protein is Cytochrome P450 2D6 (CYP2D6) of Pan paniscus (Pygmy chimpanzee).